The following is an 869-amino-acid chain: Valine--tRNA ligase (869 aa).

The short motif at 47–57 is the 'HIGH' region element; the sequence is PYPTGNFHIGN. A 'KMSKS' region motif is present at residues 521 to 525; the sequence is KMSKS. Lys-524 lines the ATP pocket.

This sequence belongs to the class-I aminoacyl-tRNA synthetase family. ValS type 2 subfamily.

The protein resides in the cytoplasm. It catalyses the reaction tRNA(Val) + L-valine + ATP = L-valyl-tRNA(Val) + AMP + diphosphate. Its function is as follows. Catalyzes the attachment of valine to tRNA(Val). As ValRS can inadvertently accommodate and process structurally similar amino acids such as threonine, to avoid such errors, it has a 'posttransfer' editing activity that hydrolyzes mischarged Thr-tRNA(Val) in a tRNA-dependent manner. This Methanosarcina acetivorans (strain ATCC 35395 / DSM 2834 / JCM 12185 / C2A) protein is Valine--tRNA ligase.